The sequence spans 125 residues: Oxytocin-neurophysin 1 (125 aa).

Positions M1–A19 are cleaved as a signal peptide. A disulfide bridge links C20 with C25. Position 28 is a glycine amide (G28). Disulfide bonds link C41–C85, C44–C58, C52–C75, C59–C65, C92–C104, C98–C116, and C105–C110.

Belongs to the vasopressin/oxytocin family. As to quaternary structure, interacts with oxytocin receptor (Ki=1.5 nM). Interacts with vasopressin V1aR/AVPR1A (Ki=37 nM), V1bR/AVPR1B (Ki=222 nM), and V2R/AVPR2 receptors (Ki=823 nM).

It is found in the secreted. Functionally, neurophysin 1 specifically binds oxytocin. In terms of biological role, oxytocin causes contraction of the smooth muscle of the uterus and of the mammary gland. Acts by binding to oxytocin receptor (OXTR). In Bos taurus (Bovine), this protein is Oxytocin-neurophysin 1 (OXT).